Reading from the N-terminus, the 269-residue chain is tRNA pseudouridine synthase A (269 aa).

The Nucleophile role is filled by aspartate 52. Tyrosine 110 serves as a coordination point for substrate.

The protein belongs to the tRNA pseudouridine synthase TruA family. As to quaternary structure, homodimer.

It carries out the reaction uridine(38/39/40) in tRNA = pseudouridine(38/39/40) in tRNA. Its function is as follows. Formation of pseudouridine at positions 38, 39 and 40 in the anticodon stem and loop of transfer RNAs. This Bacteroides thetaiotaomicron (strain ATCC 29148 / DSM 2079 / JCM 5827 / CCUG 10774 / NCTC 10582 / VPI-5482 / E50) protein is tRNA pseudouridine synthase A.